We begin with the raw amino-acid sequence, 376 residues long: Peroxisomal targeting signal 2 receptor (376 aa).

6 WD repeats span residues 58–98 (DTQD…YPVM), 102–142 (EHQR…NTSL), 182–222 (DNND…PLFM), 226–267 (AHNG…PNVH), 279–319 (GHEF…TSRV), and 339–376 (AHTEFVMGCDWSLWGEPGWVVTTGWDEMVYVWNTQRLQ).

This sequence belongs to the WD repeat peroxin-7 family. As to quaternary structure, interacts with PEX20. In terms of processing, polyubiquitinated, leading to its degradation by the proteasome. Ubiquitination is dependent of PEX5 and PEX20 and takes place following recycling into the cytosol.

It localises to the cytoplasm. The protein resides in the cytosol. It is found in the peroxisome matrix. Its function is as follows. Receptor required for the peroxisomal import of proteins containing a C-terminal PTS2-type peroxisomal targeting signal, such as 3-oxoacyl-CoA thiolase. Specifically binds to cargo proteins containing a PTS2 peroxisomal targeting signal in the cytosol. Cargo protein-binding triggers interaction with PEX20 and formation of a ternary complex composed of PEX20 and PEX7 along with PTS2-containing cargo proteins, which is tranlocated into peroxisomes by passing through the peroxisomal docking complex. PEX7 receptor is then retrotranslocated into the cytosol, where it is ubiquitinated and degraded. This is Peroxisomal targeting signal 2 receptor from Komagataella phaffii (strain GS115 / ATCC 20864) (Yeast).